A 651-amino-acid chain; its full sequence is Acetyl-coenzyme A synthetase (651 aa).

Residues 189 to 192 (RGGK), Thr-311, and Asn-335 each bind CoA. ATP contacts are provided by residues 387-389 (GEP), 411-416 (DTWWQT), Asp-500, and Arg-515. Position 523 (Ser-523) interacts with CoA. Position 526 (Arg-526) interacts with ATP. Mg(2+) contacts are provided by Val-537, His-539, and Val-542. Residue Arg-586 coordinates CoA. An N6-acetyllysine modification is found at Lys-611.

The protein belongs to the ATP-dependent AMP-binding enzyme family. Requires Mg(2+) as cofactor. In terms of processing, acetylated. Deacetylation by the SIR2-homolog deacetylase activates the enzyme.

It catalyses the reaction acetate + ATP + CoA = acetyl-CoA + AMP + diphosphate. Catalyzes the conversion of acetate into acetyl-CoA (AcCoA), an essential intermediate at the junction of anabolic and catabolic pathways. AcsA undergoes a two-step reaction. In the first half reaction, AcsA combines acetate with ATP to form acetyl-adenylate (AcAMP) intermediate. In the second half reaction, it can then transfer the acetyl group from AcAMP to the sulfhydryl group of CoA, forming the product AcCoA. In Brucella melitensis biotype 2 (strain ATCC 23457), this protein is Acetyl-coenzyme A synthetase.